Consider the following 202-residue polypeptide: Recombination protein RecR (202 aa).

The C4-type zinc-finger motif lies at 61–76; that stretch reads CARCNSFTEDDVCVIC. The Toprim domain occupies 84-179; it reads SLLCIVETPA…KVTRLARGVP (96 aa).

The protein belongs to the RecR family.

Its function is as follows. May play a role in DNA repair. It seems to be involved in an RecBC-independent recombinational process of DNA repair. It may act with RecF and RecO. In Bordetella avium (strain 197N), this protein is Recombination protein RecR.